We begin with the raw amino-acid sequence, 379 residues long: Serine/threonine-protein kinase spe-6 (379 aa).

One can recognise a Protein kinase domain in the interval 26–302 (WKVLRNIYSG…SQAATEHQVT (277 aa)). ATP-binding positions include 32-40 (IYSGPFSDV) and Lys-55. The Proton acceptor role is filled by Asp-147. The segment at 331-379 (ASAKLDAKDNANESMDIEFDDMPPKEGISKSLSAEKSCTKNVETARTEK) is disordered. A compositionally biased stretch (polar residues) spans 360 to 372 (KSLSAEKSCTKNV).

It belongs to the protein kinase superfamily. CK1 Ser/Thr protein kinase family.

The enzyme catalyses L-seryl-[protein] + ATP = O-phospho-L-seryl-[protein] + ADP + H(+). The catalysed reaction is L-threonyl-[protein] + ATP = O-phospho-L-threonyl-[protein] + ADP + H(+). In terms of biological role, serine/threonine-protein kinase which is involved in spermatogenesis. In spermatocytes, regulates meiosis and the localization and assembly of major sperm protein (MSP) into fibrous bodies. In addition, may suppress the initiation of spermiogenesis downstream of spe-8, spe-12, spe-27 and spe-29. This chain is Serine/threonine-protein kinase spe-6, found in Caenorhabditis elegans.